The following is a 501-amino-acid chain: Probable cytosol aminopeptidase (501 aa).

Mn(2+)-binding residues include Lys268 and Asp273. Lys280 is an active-site residue. Asp291, Asp350, and Glu352 together coordinate Mn(2+). Arg354 is an active-site residue.

This sequence belongs to the peptidase M17 family. The cofactor is Mn(2+).

Its subcellular location is the cytoplasm. It catalyses the reaction Release of an N-terminal amino acid, Xaa-|-Yaa-, in which Xaa is preferably Leu, but may be other amino acids including Pro although not Arg or Lys, and Yaa may be Pro. Amino acid amides and methyl esters are also readily hydrolyzed, but rates on arylamides are exceedingly low.. The catalysed reaction is Release of an N-terminal amino acid, preferentially leucine, but not glutamic or aspartic acids.. Presumably involved in the processing and regular turnover of intracellular proteins. Catalyzes the removal of unsubstituted N-terminal amino acids from various peptides. This is Probable cytosol aminopeptidase from Idiomarina loihiensis (strain ATCC BAA-735 / DSM 15497 / L2-TR).